Consider the following 294-residue polypeptide: ATP synthase gamma chain (294 aa).

This sequence belongs to the ATPase gamma chain family. In terms of assembly, F-type ATPases have 2 components, CF(1) - the catalytic core - and CF(0) - the membrane proton channel. CF(1) has five subunits: alpha(3), beta(3), gamma(1), delta(1), epsilon(1). CF(0) has three main subunits: a, b and c.

The protein localises to the cell inner membrane. Produces ATP from ADP in the presence of a proton gradient across the membrane. The gamma chain is believed to be important in regulating ATPase activity and the flow of protons through the CF(0) complex. The chain is ATP synthase gamma chain from Rhizobium etli (strain CIAT 652).